Here is a 142-residue protein sequence, read N- to C-terminus: Large ribosomal subunit protein uL11 (142 aa).

It belongs to the universal ribosomal protein uL11 family. As to quaternary structure, part of the ribosomal stalk of the 50S ribosomal subunit. Interacts with L10 and the large rRNA to form the base of the stalk. L10 forms an elongated spine to which L12 dimers bind in a sequential fashion forming a multimeric L10(L12)X complex. One or more lysine residues are methylated.

Its function is as follows. Forms part of the ribosomal stalk which helps the ribosome interact with GTP-bound translation factors. The polypeptide is Large ribosomal subunit protein uL11 (Rhodospirillum rubrum (strain ATCC 11170 / ATH 1.1.1 / DSM 467 / LMG 4362 / NCIMB 8255 / S1)).